We begin with the raw amino-acid sequence, 233 residues long: Defense protein 3 (233 aa).

A signal peptide spans 1-17 (MFGKFVLLAVLLVGVNS). The propeptide occupies 18–45 (RYVIIEDPVYYIEDHELPEQWTSSRVRR).

The protein belongs to the attacin/sarcotoxin-2 family.

Its subcellular location is the secreted. In terms of biological role, has antibacterial activity against both Gram-positive and Gram-negative bacteria. The protein is Defense protein 3 of Lonomia obliqua (Moth).